Consider the following 514-residue polypeptide: ATP synthase subunit alpha (514 aa).

170-177 (GDRQIGKT) is a binding site for ATP.

It belongs to the ATPase alpha/beta chains family. In terms of assembly, F-type ATPases have 2 components, CF(1) - the catalytic core - and CF(0) - the membrane proton channel. CF(1) has five subunits: alpha(3), beta(3), gamma(1), delta(1), epsilon(1). CF(0) has three main subunits: a(1), b(2) and c(9-12). The alpha and beta chains form an alternating ring which encloses part of the gamma chain. CF(1) is attached to CF(0) by a central stalk formed by the gamma and epsilon chains, while a peripheral stalk is formed by the delta and b chains.

The protein localises to the cell inner membrane. The enzyme catalyses ATP + H2O + 4 H(+)(in) = ADP + phosphate + 5 H(+)(out). In terms of biological role, produces ATP from ADP in the presence of a proton gradient across the membrane. The alpha chain is a regulatory subunit. The sequence is that of ATP synthase subunit alpha from Pseudomonas syringae pv. tomato (strain ATCC BAA-871 / DC3000).